A 136-amino-acid polypeptide reads, in one-letter code: Large-conductance mechanosensitive channel (136 aa).

The next 2 membrane-spanning stretches (helical) occupy residues 10-30 and 76-96; these read FAMR…AAFG and GVFI…FMAI.

The protein belongs to the MscL family. Homopentamer.

The protein localises to the cell inner membrane. In terms of biological role, channel that opens in response to stretch forces in the membrane lipid bilayer. May participate in the regulation of osmotic pressure changes within the cell. This chain is Large-conductance mechanosensitive channel, found in Escherichia coli O139:H28 (strain E24377A / ETEC).